Here is a 481-residue protein sequence, read N- to C-terminus: Solute carrier family 46 member 2 (481 aa).

The Cytoplasmic portion of the chain corresponds to 1–37; sequence MGPEAAGPGRGAAPRLQVRTWIEPVVAATQVASSLYE. A helical transmembrane segment spans residues 38 to 58; it reads AGLLLVVKASFGAGAGAGAGA. The Extracellular segment spans residues 59-83; it reads ASNHSAGPPRGAPEDQQQRAISNFY. An N-linked (GlcNAc...) asparagine glycan is attached at Asn-61. A helical membrane pass occupies residues 84–104; it reads IVYNLVVGLTPLLSAYALGWL. Over 105 to 113 the chain is Cytoplasmic; the sequence is SDRRHRKVA. The chain crosses the membrane as a helical span at residues 114 to 134; that stretch reads ICVALLGFLLSRVGLLLKVLL. Residues 135–143 are Extracellular-facing; sequence DWPVEVLYG. The helical transmembrane segment at 144-164 threads the bilayer; that stretch reads AAALNGLCGGFSAFWAGVMAL. The Cytoplasmic segment spans residues 165–179; that stretch reads GSLGSSEGRRSVRLV. A helical membrane pass occupies residues 180-200; the sequence is LIDLILGLAGFCGSMASGHLF. The Extracellular portion of the chain corresponds to 201 to 210; sequence KQVAGHSGQG. The chain crosses the membrane as a helical span at residues 211–231; it reads LVLTACSVSCATFALLYSLLV. Residues 232-286 are Cytoplasmic-facing; that stretch reads LKVPEAAAGSGQALSAGDSVAGTVGTYRTLDPDHSDKQSVQGLHPPSPGKAKPRR. Positions 263-282 are disordered; that stretch reads PDHSDKQSVQGLHPPSPGKA. The helical transmembrane segment at 287–307 threads the bilayer; that stretch reads TIIALLFLGAIVYDLAVVGTV. The Extracellular segment spans residues 308–326; that stretch reads DVMPLFVLREPLSWNQVQV. The helical transmembrane segment at 327–347 threads the bilayer; it reads GYGMAAGYTIFITSFLGVLVF. Residues 348-353 lie on the Cytoplasmic side of the membrane; sequence SRCFQD. A helical membrane pass occupies residues 354–374; sequence TTMIMIGMVSFGSGALLLAFV. The Extracellular segment spans residues 375 to 376; it reads KE. A helical membrane pass occupies residues 377-397; the sequence is TYMFYIARAVMLFALIPITTI. At 398–412 the chain is on the cytoplasmic side; sequence RSAMSKLIKGSSYGK. A helical transmembrane segment spans residues 413–433; the sequence is VFVILQLSLTLTGVVTSTVYN. The Extracellular portion of the chain corresponds to 434–446; that stretch reads KIYQVTMEKFIGT. A helical transmembrane segment spans residues 447 to 467; the sequence is CFALSSFLSFLAIIPIGIVAY. Over 468 to 481 the chain is Cytoplasmic; the sequence is KQASWLQYGDVRET.

It belongs to the major facilitator superfamily. SLC46A family. Glycosylated. In terms of tissue distribution, highly expressed by the epididymal duct epithelium.

The protein resides in the endosome membrane. The protein localises to the cell membrane. It carries out the reaction N-acetyl-beta-D-glucosaminyl-(1-&gt;4)-1,6-anhydro-N-acetyl-beta-D-muramoyl-L-alanyl-gamma-D-glutamyl-meso-2,6-diaminopimeloyl-D-alanine(out) + n H(+)(out) = N-acetyl-beta-D-glucosaminyl-(1-&gt;4)-1,6-anhydro-N-acetyl-beta-D-muramoyl-L-alanyl-gamma-D-glutamyl-meso-2,6-diaminopimeloyl-D-alanine(in) + n H(+)(in). It catalyses the reaction L-alanyl-gamma-D-glutamyl-meso-2,6-diaminopimelate(out) + n H(+)(out) = L-alanyl-gamma-D-glutamyl-meso-2,6-diaminopimelate(in) + n H(+)(in). The catalysed reaction is N-acetyl-D-muramoyl-L-alanyl-D-isoglutamine(out) + n H(+)(out) = N-acetyl-D-muramoyl-L-alanyl-D-isoglutamine(in) + n H(+)(in). The enzyme catalyses 2',3'-cGAMP(out) + n H(+)(out) = 2',3'-cGAMP(in) + n H(+)(in). It carries out the reaction 3',3'-cGAMP(out) + n H(+)(out) = 3',3'-cGAMP(in) + n H(+)(in). Its function is as follows. Proton-coupled transporter that delivers pathogen-associated or danger-associated molecular patterns to cytosolic pattern recognition receptors as part of the innate immune response to microbes or tissue injury. Has selectivity toward muropeptides that contain the amino acid diaminopimelic acid (DAP-type peptidoglycan muropeptides) including Tri-DAP and tracheal toxin (TCT), common in Gram-negative bacteria and Gram-positive bacilli. In the context of immune recognition of skin microbiota, shuttles bacterial muropeptides across the endolysosomal membranes into the cytosol for recognition by NOD1, triggering MYD88-dependent secretion of IL1A and neutrophil recruitment in a pyroptosis-type inflammatory process. To a lesser extent and redundantly, transports muramyl dipeptides derived from most bacterial proteoglycans, eliciting NOD2 receptor activation and downstream inflammatory responses. Postulated to function as an importer of cyclic GMP-AMP dinucleotides (cGAMPs) in monocyte and macrophage cell lineages. Selectively imports cGAMPs derived from pathogenic bacteria such as 3'3'-cGAMP thus providing for differential immune recognition of pathogenic versus commensal bacteria. During tumorigenesis may transport extracellular tumor-derived 2'3'-cGAMP across the plasma membrane of M1-polarized macrophages to activate the anti-tumoral stimulator of interferon genes (STING) pathway. The transport mechanism, its electrogenicity and stoichiometry remain to be elucidated. In Canis lupus familiaris (Dog), this protein is Solute carrier family 46 member 2.